Reading from the N-terminus, the 588-residue chain is Sperm-associated microtubule inner protein 4 (588 aa).

Threonine 219 carries the phosphothreonine modification. Serine 406, serine 421, and serine 427 each carry phosphoserine. Residue tyrosine 441 is modified to Phosphotyrosine. Phosphoserine is present on residues serine 457, serine 484, and serine 516.

Predominantly expressed in the testes.

The protein resides in the cytoplasm. It is found in the cytoskeleton. The protein localises to the microtubule organizing center. It localises to the centrosome. Its subcellular location is the flagellum axoneme. Microtubule inner protein (MIP) part of the dynein-decorated doublet microtubules (DMTs) in flagellum axoneme. May serve to reinforce and thus stabilize the microtubule structure in the sperm flagella. This is Sperm-associated microtubule inner protein 4 (Spmip4) from Mus musculus (Mouse).